The primary structure comprises 214 residues: 2-phospho-L-lactate guanylyltransferase (214 aa).

The protein belongs to the CofC family. Homodimer.

The enzyme catalyses (2S)-2-phospholactate + GTP + H(+) = (2S)-lactyl-2-diphospho-5'-guanosine + diphosphate. Its pathway is cofactor biosynthesis; coenzyme F420 biosynthesis. Its function is as follows. Guanylyltransferase that catalyzes the activation of (2S)-2-phospholactate (2-PL) as (2S)-lactyl-2-diphospho-5'-guanosine, via the condensation of 2-PL with GTP. It is involved in the biosynthesis of coenzyme F420, a hydride carrier cofactor. The polypeptide is 2-phospho-L-lactate guanylyltransferase (Methanoregula boonei (strain DSM 21154 / JCM 14090 / 6A8)).